The following is a 193-amino-acid chain: Thymidine kinase (193 aa).

9–16 provides a ligand contact to ATP; that stretch reads AAMNAGKS.

This sequence belongs to the thymidine kinase family.

It carries out the reaction thymidine + ATP = dTMP + ADP + H(+). In terms of biological role, this thymidine kinase is one of the enzymes that catalyze DNA precursor synthesis. Although tk is a nonessential gene, some strains of host E.coli do not support the growth of phages that lack this gene. This Escherichia coli (Bacteriophage T4) protein is Thymidine kinase (TK).